The sequence spans 161 residues: Heme transporter hrg-6 (161 aa).

Transmembrane regions (helical) follow at residues 13 to 33 (IAYT…YIFA), 38 to 58 (VALA…YFYL), 75 to 95 (VLFW…ITAI), and 115 to 135 (WWST…NAFI).

Belongs to the HRG family.

It localises to the membrane. In terms of biological role, heme transporter. The chain is Heme transporter hrg-6 (hrg-6) from Caenorhabditis elegans.